We begin with the raw amino-acid sequence, 190 residues long: Protein GrpE (190 aa).

Belongs to the GrpE family. In terms of assembly, homodimer.

The protein localises to the cytoplasm. In terms of biological role, participates actively in the response to hyperosmotic and heat shock by preventing the aggregation of stress-denatured proteins, in association with DnaK and GrpE. It is the nucleotide exchange factor for DnaK and may function as a thermosensor. Unfolded proteins bind initially to DnaJ; upon interaction with the DnaJ-bound protein, DnaK hydrolyzes its bound ATP, resulting in the formation of a stable complex. GrpE releases ADP from DnaK; ATP binding to DnaK triggers the release of the substrate protein, thus completing the reaction cycle. Several rounds of ATP-dependent interactions between DnaJ, DnaK and GrpE are required for fully efficient folding. In Streptococcus agalactiae serotype III (strain NEM316), this protein is Protein GrpE.